The chain runs to 247 residues: Ribonuclease 3 (247 aa).

The 129-residue stretch at 21–149 (VDHQPLLDHL…LFGAIFRQHG (129 aa)) folds into the RNase III domain. A Mg(2+)-binding site is contributed by Glu-62. Residue Asp-66 is part of the active site. Positions 135 and 138 each coordinate Mg(2+). Glu-138 is an active-site residue. In terms of domain architecture, DRBM spans 176-244 (DWKTTLQEEL…AHQAFRKLRE (69 aa)).

This sequence belongs to the ribonuclease III family. Homodimer. The cofactor is Mg(2+).

The protein localises to the cytoplasm. The enzyme catalyses Endonucleolytic cleavage to 5'-phosphomonoester.. In terms of biological role, digests double-stranded RNA. Involved in the processing of primary rRNA transcript to yield the immediate precursors to the large and small rRNAs (23S and 16S). Processes some mRNAs, and tRNAs when they are encoded in the rRNA operon. Processes pre-crRNA and tracrRNA of type II CRISPR loci if present in the organism. The polypeptide is Ribonuclease 3 (Corynebacterium glutamicum (strain ATCC 13032 / DSM 20300 / JCM 1318 / BCRC 11384 / CCUG 27702 / LMG 3730 / NBRC 12168 / NCIMB 10025 / NRRL B-2784 / 534)).